A 344-amino-acid polypeptide reads, in one-letter code: tRNA(Ile)-lysidine synthase (344 aa).

Position 43–48 (43–48 (SGGADS)) interacts with ATP.

The protein belongs to the tRNA(Ile)-lysidine synthase family.

It localises to the cytoplasm. It carries out the reaction cytidine(34) in tRNA(Ile2) + L-lysine + ATP = lysidine(34) in tRNA(Ile2) + AMP + diphosphate + H(+). Functionally, ligates lysine onto the cytidine present at position 34 of the AUA codon-specific tRNA(Ile) that contains the anticodon CAU, in an ATP-dependent manner. Cytidine is converted to lysidine, thus changing the amino acid specificity of the tRNA from methionine to isoleucine. This chain is tRNA(Ile)-lysidine synthase, found in Bordetella bronchiseptica (strain ATCC BAA-588 / NCTC 13252 / RB50) (Alcaligenes bronchisepticus).